The primary structure comprises 609 residues: UvrABC system protein C (609 aa).

Residues S16–V94 enclose the GIY-YIG domain. Positions Q203 to V238 constitute a UVR domain.

This sequence belongs to the UvrC family. Interacts with UvrB in an incision complex.

The protein localises to the cytoplasm. Functionally, the UvrABC repair system catalyzes the recognition and processing of DNA lesions. UvrC both incises the 5' and 3' sides of the lesion. The N-terminal half is responsible for the 3' incision and the C-terminal half is responsible for the 5' incision. The chain is UvrABC system protein C from Shewanella baltica (strain OS195).